The primary structure comprises 197 residues: uncharacterized protein (197 aa).

Positions 1-135 (MKTPWKFLAR…ERGKRANARV (135 aa)) are disordered. Over residues 14–32 (RQPSGKTQESSAGNDTGSK) the composition is skewed to polar residues. Residues 83–96 (IHADEAQTTARDEA) are compositionally biased toward basic and acidic residues. A compositionally biased stretch (basic residues) spans 116 to 132 (SQRKPRIKRRERGKRAN).

The protein to Rhizobium NGR234A y4nF and y4aO.

This is an uncharacterized protein from Rhizobium meliloti (strain 1021) (Ensifer meliloti).